Here is a 598-residue protein sequence, read N- to C-terminus: Nuclear receptor subfamily 4immunitygroup A member 1 (598 aa).

Disordered regions lie at residues Met1–Pro44, Tyr131–Phe158, Leu177–Pro206, and Gly221–Gly265. The segment covering Ser134–Ser145 has biased composition (low complexity). Residues Arg171–Ser466 are required for nuclear import. The segment at residues Glu264–Thr339 is a DNA-binding region (nuclear receptor). 2 consecutive NR C4-type zinc fingers follow at residues Cys267–Cys287 and Cys303–Cys327. Residues Ala268–Lys354 are required for binding NBRE-containing DNA. The tract at residues Ala299 to Pro361 is required for the interaction with RXRA. Position 341 is a phosphoserine; by PKA (Ser341). A disordered region spans residues Ser341–Pro361. The residue at position 351 (Ser351) is a Phosphoserine. Residues Ser360–Thr595 enclose the NR LBD domain. The tract at residues Pro521–Gly544 is binds lipopolysaccharide. Residues Pro584–Thr595 form an AF-2 region.

It belongs to the nuclear hormone receptor family. NR4 subfamily. As to quaternary structure, binds the NGFI-B response element (NBRE) as a monomer. Binds the Nur response element (NurRE), consisting of two inverse NBRE-related octanucleotide repeats separated by 6 base-pairs, as a dimer. Interacts (via N-terminus) with NLRP3 (via LRR repeat domain); the interaction is direct, requires binding of NR4A1/Nur77 to NBRE-containing dsDNA and lipopolysaccharide, and leads to non-canonical NLRP3 inflammasome activation. Interacts with GADD45GIP1. Interacts with STK11. Interacts with IFI27. Heterodimer (via DNA-binding domain) with RXRA (via C-terminus); DNA-binding of the heterodimer is enhanced by 9-cis retinoic acid. Competes for the RXRA interaction with EP300 and thereby attenuates EP300 mediated acetylation of RXRA. Interacts with NCOA1. Interacts with NCOA2. Interacts with NCOA3. Zn(2+) serves as cofactor. Post-translationally, phosphorylated at Ser-351 by RPS6KA1 and RPS6KA3 in response to mitogenic or stress stimuli. In terms of processing, acetylated by p300/CBP, acetylation increases stability. Deacetylated by HDAC1. In terms of tissue distribution, fetal muscle and adult liver, brain and thyroid.

The protein resides in the nucleus. The protein localises to the cytoplasm. Its subcellular location is the cytosol. It is found in the mitochondrion. With respect to regulation, its transcription factor activity is activated by binding cytosporone B (Csn-B) via its ligand-binding (NR LBD) domain and stimulates recruitment of coactivators NCOA1 and NCOA2, but not NCOA3, to promoters. Csn-B-binding is also accompanied by its translocation to the mitochondrion. Its transcription factor activity is activated by corticotropin-releasing hormone (CRH) and forskolin. Not activated by binding cytosporone C (Csn-C). In terms of biological role, orphan nuclear receptor. Binds the NGFI-B response element (NBRE) 5'-AAAGGTCA-3'. Binds 9-cis-retinoic acid outside of its ligand-binding (NR LBD) domain. Participates in energy homeostasis by sequestrating the kinase STK11 in the nucleus, thereby attenuating cytoplasmic AMPK activation. Regulates the inflammatory response in macrophages by regulating metabolic adaptations during inflammation, including repressing the transcription of genes involved in the citric acid cycle (TCA). Inhibits NF-kappa-B signaling by binding to low-affinity NF-kappa-B binding sites, such as at the IL2 promoter. May act concomitantly with NR4A2 in regulating the expression of delayed-early genes during liver regeneration. Plays a role in the vascular response to injury. Its function is as follows. In the cytosol, upon its detection of both bacterial lipopolysaccharide (LPS) and NBRE-containing mitochondrial DNA released by GSDMD pores during pyroptosis, it promotes non-canonical NLRP3 inflammasome activation by stimulating association of NLRP3 and NEK7. This Homo sapiens (Human) protein is Nuclear receptor subfamily 4immunitygroup A member 1 (NR4A1).